The primary structure comprises 1232 residues: Anion exchange protein 3 (1232 aa).

Residues 1–11 (MANGVIPPPGG) are compositionally biased toward pro residues. Disordered regions lie at residues 1–316 (MANG…KLDR) and 429–498 (NDDK…GDGH). The Cytoplasmic portion of the chain corresponds to 1–708 (MANGVIPPPG…DLRDALHSQC (708 aa)). The span at 58–75 (DPEKPSRSYSERDFEFHR) shows a compositional bias: basic and acidic residues. Composition is skewed to basic residues over residues 76-97 (HTSHHTHHPLSARLPPPHKLRR) and 104-113 (RHTRRKRKKE). Over residues 134 to 152 (VEEEEEEEEEEEGESEAEP) the composition is skewed to acidic residues. 4 positions are modified to phosphoserine: serine 167, serine 170, serine 175, and serine 198. Residues 200-214 (QHSSSSPSPRAQASR) show a composition bias toward low complexity. Residues 267–279 (DDMKSHRLEDNPG) are compositionally biased toward basic and acidic residues. Over residues 280-289 (VRRHLVKKPS) the composition is skewed to basic residues. Arginine 295 bears the Omega-N-methylarginine mark. Basic residues predominate over residues 305–316 (LRRKKKKKKLDR). The span at 440-450 (NPSSSSMNSVL) shows a compositional bias: polar residues. Basic and acidic residues predominate over residues 481-498 (HDPDAKEKPLHMPGGDGH). The next 5 helical transmembrane spans lie at 709 to 731 (VAAVLFIYFAALSPAITFGGLLG), 737 to 774 (LMGVSELIVSTAVLGVLFSLLGAQPLLVVGFSGPLLVF), 794 to 816 (VWVGLWLVVFVLALVAAEGSFLV), 826 to 847 (IFAFLISLIFIYETFYKLYKVF), and 893 to 910 (ALLSLILMLGTFFIAFFL). A membrane (anion exchange) region spans residues 709-1232 (VAAVLFIYFA…DEYNELHMPV (524 aa)). Over 911–925 (RKFRNSRFLGGKARR) the chain is Cytoplasmic. A run of 5 helical transmembrane segments spans residues 926–946 (IIGDFGIPISILVMVLVDYSI), 980–1002 (PFPPWMMVAAAVPALLVLILIFM), 1028–1049 (LLLIGSLGGLCGLFGLPWLTAA), 1083–1128 (VTGV…IQLS), and 1155–1191 (MHLFICIQLGCIALLWVVKSTAASLAFPFLLLLTVPL). Cysteine 1165 carries S-palmitoyl cysteine lipidation.

The protein belongs to the anion exchanger (TC 2.A.31) family.

The protein resides in the cell membrane. It carries out the reaction hydrogencarbonate(in) + chloride(out) = hydrogencarbonate(out) + chloride(in). In terms of biological role, sodium-independent anion exchanger which mediates the electroneutral exchange of chloride for bicarbonate ions across the cell membrane. May be involved in the regulation of intracellular pH, and the modulation of cardiac action potential. The protein is Anion exchange protein 3 (SLC4A3) of Pongo abelii (Sumatran orangutan).